The chain runs to 261 residues: Thiazole synthase (261 aa).

Lys-102 acts as the Schiff-base intermediate with DXP in catalysis. 1-deoxy-D-xylulose 5-phosphate-binding positions include Gly-163, 189–190, and 211–212; these read AG and NT.

The protein belongs to the ThiG family. In terms of assembly, homotetramer. Forms heterodimers with either ThiH or ThiS.

The protein resides in the cytoplasm. The enzyme catalyses [ThiS sulfur-carrier protein]-C-terminal-Gly-aminoethanethioate + 2-iminoacetate + 1-deoxy-D-xylulose 5-phosphate = [ThiS sulfur-carrier protein]-C-terminal Gly-Gly + 2-[(2R,5Z)-2-carboxy-4-methylthiazol-5(2H)-ylidene]ethyl phosphate + 2 H2O + H(+). The protein operates within cofactor biosynthesis; thiamine diphosphate biosynthesis. Its function is as follows. Catalyzes the rearrangement of 1-deoxy-D-xylulose 5-phosphate (DXP) to produce the thiazole phosphate moiety of thiamine. Sulfur is provided by the thiocarboxylate moiety of the carrier protein ThiS. In vitro, sulfur can be provided by H(2)S. In Myxococcus xanthus (strain DK1622), this protein is Thiazole synthase.